The primary structure comprises 228 residues: Probable septum site-determining protein MinC (228 aa).

Belongs to the MinC family. In terms of assembly, interacts with MinD and FtsZ.

Its function is as follows. Cell division inhibitor that blocks the formation of polar Z ring septums. Rapidly oscillates between the poles of the cell to destabilize FtsZ filaments that have formed before they mature into polar Z rings. Prevents FtsZ polymerization. This is Probable septum site-determining protein MinC from Pectobacterium carotovorum subsp. carotovorum (strain PC1).